The sequence spans 475 residues: Ribulose bisphosphate carboxylase large chain (475 aa).

A propeptide spanning residues 1–2 (MS) is cleaved from the precursor. Pro3 is modified (N-acetylproline). Lys14 bears the N6,N6,N6-trimethyllysine mark. Substrate-binding residues include Asn123 and Thr173. Catalysis depends on Lys175, which acts as the Proton acceptor. Lys177 lines the substrate pocket. Lys201, Asp203, and Glu204 together coordinate Mg(2+). The residue at position 201 (Lys201) is an N6-carboxylysine. The active-site Proton acceptor is His294. Positions 295, 327, and 379 each coordinate substrate.

It belongs to the RuBisCO large chain family. Type I subfamily. In terms of assembly, heterohexadecamer of 8 large chains and 8 small chains; disulfide-linked. The disulfide link is formed within the large subunit homodimers. Requires Mg(2+) as cofactor. The disulfide bond which can form in the large chain dimeric partners within the hexadecamer appears to be associated with oxidative stress and protein turnover.

The protein localises to the plastid. Its subcellular location is the chloroplast. It catalyses the reaction 2 (2R)-3-phosphoglycerate + 2 H(+) = D-ribulose 1,5-bisphosphate + CO2 + H2O. It carries out the reaction D-ribulose 1,5-bisphosphate + O2 = 2-phosphoglycolate + (2R)-3-phosphoglycerate + 2 H(+). In terms of biological role, ruBisCO catalyzes two reactions: the carboxylation of D-ribulose 1,5-bisphosphate, the primary event in carbon dioxide fixation, as well as the oxidative fragmentation of the pentose substrate in the photorespiration process. Both reactions occur simultaneously and in competition at the same active site. This chain is Ribulose bisphosphate carboxylase large chain, found in Plumbago auriculata (Cape leadwort).